A 328-amino-acid chain; its full sequence is Complex I intermediate-associated protein 30, mitochondrial (328 aa).

The N-terminal 24 residues, 1-24 (MSSIHKLLTGIYIHKNFLRPRAAL), are a transit peptide targeting the mitochondrion. A compositionally biased stretch (polar residues) spans 44 to 54 (VTSVDRASQQG). A disordered region spans residues 44 to 80 (VTSVDRASQQGKTEEGLQGHDHKEVALDAPSPDRTPE). The segment covering 55 to 69 (KTEEGLQGHDHKEVA) has biased composition (basic and acidic residues). Serine 319 is subject to Phosphoserine.

It belongs to the CIA30 family. In terms of assembly, part of the mitochondrial complex I assembly/MCIA complex that comprises at least the core subunits TMEM126B, NDUFAF1, ECSIT and ACAD9 and complement subunits such as COA1 and TMEM186. Interacts with ECSIT. Interacts with ACAD9. At early stages of complex I assembly, it is found in intermediate subcomplexes that contain different subunits including NDUFB6, NDUFA6, NDUFA9, NDUFS3, NDUFS7, ND1, ND2 and ND3. Interacts with TMEM70 and TMEM242.

It is found in the mitochondrion. It localises to the mitochondrion matrix. Functionally, as part of the MCIA complex, involved in the assembly of the mitochondrial complex I. This is Complex I intermediate-associated protein 30, mitochondrial from Mus musculus (Mouse).